Reading from the N-terminus, the 113-residue chain is MKLKNNLLEKTLELSELFKIYKELLTDKQKQYFELYIDEDLSLSEIADEFNISKTAVYDSISKTSKLLFSLEKKLHLKQKEELLISLINKIETNQIDEKQFIKSLKEVIWWKY.

This sequence belongs to the UPF0122 family.

Its function is as follows. Might take part in the signal recognition particle (SRP) pathway. This is inferred from the conservation of its genetic proximity to ftsY/ffh. May be a regulatory protein. In Mycoplasma capricolum subsp. capricolum (strain California kid / ATCC 27343 / NCTC 10154), this protein is UPF0122 protein MCAP_0480.